The primary structure comprises 291 residues: 33 kDa chaperonin (291 aa).

Disulfide bonds link cysteine 237-cysteine 239 and cysteine 270-cysteine 273.

It belongs to the HSP33 family. In terms of processing, under oxidizing conditions two disulfide bonds are formed involving the reactive cysteines. Under reducing conditions zinc is bound to the reactive cysteines and the protein is inactive.

It is found in the cytoplasm. In terms of biological role, redox regulated molecular chaperone. Protects both thermally unfolding and oxidatively damaged proteins from irreversible aggregation. Plays an important role in the bacterial defense system toward oxidative stress. The polypeptide is 33 kDa chaperonin (Clostridioides difficile (strain 630) (Peptoclostridium difficile)).